The chain runs to 86 residues: UPF0147 protein PYRAB16980 (86 aa).

Belongs to the UPF0147 family.

This is UPF0147 protein PYRAB16980 from Pyrococcus abyssi (strain GE5 / Orsay).